The sequence spans 433 residues: 3-phosphoshikimate 1-carboxyvinyltransferase (433 aa).

3-phosphoshikimate-binding residues include K22, S23, and R27. Phosphoenolpyruvate is bound at residue K22. Residues G96 and R129 each contribute to the phosphoenolpyruvate site. S175, S176, Q177, S203, D318, N341, and K345 together coordinate 3-phosphoshikimate. Residue Q177 participates in phosphoenolpyruvate binding. D318 functions as the Proton acceptor in the catalytic mechanism. Residues R349, R393, and K418 each coordinate phosphoenolpyruvate.

Belongs to the EPSP synthase family. As to quaternary structure, monomer.

The protein resides in the cytoplasm. The catalysed reaction is 3-phosphoshikimate + phosphoenolpyruvate = 5-O-(1-carboxyvinyl)-3-phosphoshikimate + phosphate. It functions in the pathway metabolic intermediate biosynthesis; chorismate biosynthesis; chorismate from D-erythrose 4-phosphate and phosphoenolpyruvate: step 6/7. Its function is as follows. Catalyzes the transfer of the enolpyruvyl moiety of phosphoenolpyruvate (PEP) to the 5-hydroxyl of shikimate-3-phosphate (S3P) to produce enolpyruvyl shikimate-3-phosphate and inorganic phosphate. This is 3-phosphoshikimate 1-carboxyvinyltransferase from Mannheimia succiniciproducens (strain KCTC 0769BP / MBEL55E).